A 280-amino-acid polypeptide reads, in one-letter code: Fructose-1,6-bisphosphatase class 1 (280 aa).

Mg(2+) contacts are provided by Glu64, Asp83, Leu85, and Asp86. Substrate-binding positions include 86–89 (DGSS), Tyr190, and Lys221. Glu227 serves as a coordination point for Mg(2+).

This sequence belongs to the FBPase class 1 family. As to quaternary structure, homotetramer. Requires Mg(2+) as cofactor.

Its subcellular location is the cytoplasm. The catalysed reaction is beta-D-fructose 1,6-bisphosphate + H2O = beta-D-fructose 6-phosphate + phosphate. It functions in the pathway carbohydrate biosynthesis; gluconeogenesis. This is Fructose-1,6-bisphosphatase class 1 from Campylobacter hominis (strain ATCC BAA-381 / DSM 21671 / CCUG 45161 / LMG 19568 / NCTC 13146 / CH001A).